Reading from the N-terminus, the 335-residue chain is Olfactory receptor 52B6 (335 aa).

Topologically, residues 1–45 (MAQVRALHKIMALFSANSIGAMNNSDTRIAGCFLTGIPGLEQLHI) are extracellular. An N-linked (GlcNAc...) asparagine glycan is attached at N23. Residues 46 to 66 (WLSIPFCIMYITALEGNGILI) form a helical membrane-spanning segment. At 67–74 (CVILSQAI) the chain is on the cytoplasmic side. Residues 75-95 (LHEPMYIFLSMLASADVLLST) form a helical membrane-spanning segment. At 96-119 (TTMPKALANLWLGYSLISFDGCLT) the chain is on the extracellular side. Cysteines 117 and 208 form a disulfide. Residues 120–139 (QMFFIHFLFIHSAVLLAMAF) traverse the membrane as a helical segment. Residues 140 to 158 (DRYVAICSPLRYVTILTSK) lie on the Cytoplasmic side of the membrane. A helical transmembrane segment spans residues 159-179 (VIGKIVTAALSHSFIIMFPSI). Residues 180 to 215 (FLLEHLHYCQINIIAHTFCEHMGIAHLSCSDISINV) are Extracellular-facing. A helical transmembrane segment spans residues 216 to 236 (WYGLAAALLSTGLDIMLITVS). Residues 237–256 (YIHILQAVFRLLSQDARSKA) are Cytoplasmic-facing. Residues 257-277 (LSTCGSHICVILLFYVPALFS) traverse the membrane as a helical segment. The Extracellular segment spans residues 278-293 (VFAYRFGGRSVPCYVH). Residues 294-314 (ILLASLYVVIPPMLNPVIYGV) form a helical membrane-spanning segment. The Cytoplasmic segment spans residues 315–335 (RTKPILEGAKQMFSNLAKGSK).

This sequence belongs to the G-protein coupled receptor 1 family.

It localises to the cell membrane. Its function is as follows. Odorant receptor. In Homo sapiens (Human), this protein is Olfactory receptor 52B6 (OR52B6).